The chain runs to 173 residues: RNA polymerase sigma factor YlaC (173 aa).

It belongs to the sigma-70 factor family. ECF subfamily.

Its function is as follows. Sigma factors are initiation factors that promote the attachment of RNA polymerase to specific initiation sites and are then released. This sigma factor contributes to oxidative stress resistance. This chain is RNA polymerase sigma factor YlaC (ylaC), found in Bacillus subtilis (strain 168).